The primary structure comprises 56 residues: Large ribosomal subunit protein bL33A (56 aa).

Belongs to the bacterial ribosomal protein bL33 family.

The sequence is that of Large ribosomal subunit protein bL33A from Cutibacterium acnes (strain DSM 16379 / KPA171202) (Propionibacterium acnes).